The primary structure comprises 4538 residues: Polyketide synthase PksL (4538 aa).

The segment at 1-123 is N-terminal hotdog fold 1; sequence MRWRSNVKKI…ADMHADSPAI (123 aa). The PKS/mFAS DH 1 domain maps to 1-285; it reads MRWRSNVKKI…SKLVREAELI (285 aa). The Proton acceptor; for dehydratase activity 1 role is filled by His26. The segment at 138–285 is C-terminal hotdog fold 1; it reads QNVVQLDDVY…SKLVREAELI (148 aa). Asp199 functions as the Proton donor; for dehydratase activity 1 in the catalytic mechanism. The tract at residues 289-314 is disordered; the sequence is HQDAQETQMTRADTAERDKPADMVSS. The 75-residue stretch at 320–394 folds into the Carrier 1 domain; that stretch reads SEAEQFVSQL…ELSAFLAEEY (75 aa). Position 354 is an O-(pantetheine 4'-phosphoryl)serine (Ser354). In terms of domain architecture, Ketosynthase family 3 (KS3) 1 spans 433–871; it reads AGDIAIIGLA…GSNAHIILEE (439 aa). Catalysis depends on for beta-ketoacyl synthase 1 activity residues Cys609, His744, and His784. Residues 1048–1226 are dehydratase; it reads HILHPLLHQN…DSLYAGENGV (179 aa). The N-terminal hotdog fold 2 stretch occupies residues 1051–1175; sequence HPLLHQNVSD…GSAVLCEAGE (125 aa). Residues 1051–1340 enclose the PKS/mFAS DH 2 domain; sequence HPLLHQNVSD…ARVLETDQEG (290 aa). His1080 serves as the catalytic Proton acceptor; for dehydratase activity 2. Residues 1189 to 1340 are C-terminal hotdog fold 2; the sequence is NGRTLSPFDC…ARVLETDQEG (152 aa). The Proton donor; for dehydratase activity 2 role is filled by Asp1251. The segment at 1520-1713 is beta-ketoacyl reductase 1; it reads KGVYLITGGA…WKDGGMQIDA (194 aa). Positions 1800–1873 constitute a Carrier 2 domain; sequence EKAENYFKQV…SLTRYFIDSR (74 aa). The residue at position 1834 (Ser1834) is an O-(pantetheine 4'-phosphoryl)serine. The 440-residue stretch at 1926-2365 folds into the Ketosynthase family 3 (KS3) 2 domain; sequence TEEIAIIGIS…GVNAHILIEE (440 aa). Catalysis depends on for beta-ketoacyl synthase 2 activity residues Cys2103, His2238, and His2278. The tract at residues 2546 to 2568 is disordered; that stretch reads TEEPFAPVQPVIPKPSVDREASG. 2 Carrier domains span residues 2597-2674 and 2738-2815; these read ITAE…AHEL and VAIE…KSEL. O-(pantetheine 4'-phosphoryl)serine occurs at positions 2634 and 2775. A disordered region spans residues 2828–2854; the sequence is SFEAAQQKPAASSHPKPAERPLQPVQH. The region spanning 2873-3294 is the Ketosynthase family 3 (KS3) 3 domain; that stretch reads EDAIAIVGMS…GTNAHIVIEE (422 aa). Catalysis depends on for beta-ketoacyl synthase 3 activity residues Cys3040, His3175, and His3215. Residues 3686–3887 are beta-ketoacyl reductase 2; it reads DKVLLITGGT…PNWKETGLGE (202 aa). Positions 3960 to 4037 constitute a Carrier 5 domain; the sequence is NLFPETVDWL…SFAHWLISKY (78 aa). Position 3997 is an O-(pantetheine 4'-phosphoryl)serine (Ser3997). Residues 4082–4485 form the Ketosynthase family 3 (KS3) 4 domain; sequence AEDIAIIGLS…GTNAHLIIEG (404 aa). Cys4237 functions as the For beta-ketoacyl synthase 4 activity in the catalytic mechanism.

It depends on pantetheine 4'-phosphate as a cofactor.

The protein localises to the cytoplasm. Its pathway is antibiotic biosynthesis; bacillaene biosynthesis. Functionally, involved in some intermediate steps for the synthesis of the antibiotic polyketide bacillaene which is involved in secondary metabolism. This is Polyketide synthase PksL (pksL) from Bacillus subtilis (strain 168).